Reading from the N-terminus, the 21-residue chain is M-lycotoxin-Ls4a (21 aa).

Leu21 carries the leucine amide modification.

Expressed by the venom gland.

It localises to the secreted. May inhibit growth of bacteria. In Lycosa singoriensis (Wolf spider), this protein is M-lycotoxin-Ls4a.